A 396-amino-acid chain; its full sequence is Elongation factor Tu (396 aa).

In terms of domain architecture, tr-type G spans 10–206; the sequence is KLHVNVGTIG…ALDTHIPNPE (197 aa). The interval 19–26 is G1; it reads GHVDHGKT. 19–26 contacts GTP; that stretch reads GHVDHGKT. Residue T26 coordinates Mg(2+). A G2 region spans residues 60-64; that stretch reads GITIS. A G3 region spans residues 81–84; it reads DCPG. GTP-binding positions include 81–85 and 136–139; these read DCPGH and NKAD. A G4 region spans residues 136-139; it reads NKAD. Residues 174–176 are G5; it reads SAL.

Belongs to the TRAFAC class translation factor GTPase superfamily. Classic translation factor GTPase family. EF-Tu/EF-1A subfamily. As to quaternary structure, monomer.

Its subcellular location is the cytoplasm. The catalysed reaction is GTP + H2O = GDP + phosphate + H(+). Its function is as follows. GTP hydrolase that promotes the GTP-dependent binding of aminoacyl-tRNA to the A-site of ribosomes during protein biosynthesis. This chain is Elongation factor Tu, found in Xylella fastidiosa (strain Temecula1 / ATCC 700964).